Consider the following 572-residue polypeptide: MSSCLLPQFKCPPDSFSIHFRTSFCAPKHNKGSVFFQPQCAVSTSPALLTSMLDVAKLRLPSFDTDSDSLISDRQWTYTRPDGPSTEAKYLEALASETLLTSDEAVVVAAAAEAVALARAAVKVAKDATLFKNSNNTNLLTSSTADKRSKWDQFTEKERAGILGHLAVSDNGIVSDKITASASNKESIGDLESEKQEEVELLEEQPSVSLAVRSTRQTERKARRAKGLEKTASGIPSVKTGSSPKKKRLVAQEVDHNDPLRYLRMTTSSSKLLTVREEHELSAGIQDLLKLERLQTELTERSGRQPTFAQWASAAGVDQKSLRQRIHHGTLCKDKMIKSNIRLVISIAKNYQGAGMNLQDLVQEGCRGLVRGAEKFDATKGFKFSTYAHWWIKQAVRKSLSDQSRMIRLPFHMVEATYRVKEARKQLYSETGKHPKNEEIAEATGLSMKRLMAVLLSPKPPRSLDQKIGMNQNLKPSEVIADPEAVTSEDILIKEFMRQDLDKVLDSLGTREKQVIRWRFGMEDGRMKTLQEIGEMMGVSRERVRQIESSAFRKLKNKKRNNHLQQYLVAQS.

A chloroplast-targeting transit peptide spans 1–39 (MSSCLLPQFKCPPDSFSIHFRTSFCAPKHNKGSVFFQPQ). Positions 215-249 (TRQTERKARRAKGLEKTASGIPSVKTGSSPKKKRL) are disordered. A Polymerase core binding motif is present at residues 360–373 (DLVQEGCRGLVRGA). The segment at residues 530–549 (LQEIGEMMGVSRERVRQIES) is a DNA-binding region (H-T-H motif).

Belongs to the sigma-70 factor family. In terms of tissue distribution, highly expressed in cotyledons, to a lesser extent in leaves, sepals and siliques, and barely expressed in roots. Present in seedlings.

The protein resides in the plastid. The protein localises to the chloroplast. Functionally, required for the transition of plastids into chloroplasts by coordinating nuclear and chloroplastic genomes under light conditions. Sigma factors are initiation factors that promote the attachment of plastid-encoded RNA polymerase (PEP) to specific initiation sites and are then released. Promotes the biosynthesis of plastid-encoded tRNAs (e.g. trnE-UUC and trnV-UAC). This is RNA polymerase sigma factor sigB (SIGB) from Arabidopsis thaliana (Mouse-ear cress).